Reading from the N-terminus, the 425-residue chain is Kynurenine/alpha-aminoadipate aminotransferase, mitochondrial (425 aa).

The transit peptide at 1 to 29 (MNYSRFLTATSLARKPSPIRTTADILSKA) directs the protein to the mitochondrion. Residue Arg-20 participates in substrate binding. Ser-40 bears the Phosphoserine mark. Lys-69 carries the post-translational modification N6-acetyllysine. Tyr-74 lines the substrate pocket. Lys-172 carries the post-translational modification N6-succinyllysine. Lys-179 bears the N6-acetyllysine mark. Asn-202 lines the substrate pocket. At Lys-263 the chain carries N6-(pyridoxal phosphate)lysine; alternate. 2 positions are modified to N6-acetyllysine; alternate: Lys-263 and Lys-339. Lys-263 and Lys-339 each carry N6-succinyllysine; alternate. Lys-351 carries the N6-acetyllysine modification. Lys-367 is modified (N6-acetyllysine; alternate). Lys-367 is subject to N6-succinyllysine; alternate. Arg-399 contacts substrate. N6-acetyllysine is present on Lys-422.

The protein belongs to the class-I pyridoxal-phosphate-dependent aminotransferase family. As to quaternary structure, homodimer. It depends on pyridoxal 5'-phosphate as a cofactor. As to expression, expressed mainly in kidney and to a lesser amount in liver and brain.

The protein localises to the mitochondrion. The enzyme catalyses L-kynurenine + 2-oxoglutarate = kynurenate + L-glutamate + H2O. It carries out the reaction L-2-aminoadipate + 2-oxoglutarate = 2-oxoadipate + L-glutamate. It catalyses the reaction glycine + 2-oxoglutarate = glyoxylate + L-glutamate. The catalysed reaction is L-kynurenine + glyoxylate = kynurenate + glycine + H2O. The enzyme catalyses 3-hydroxy-L-kynurenine + glyoxylate = xanthurenate + glycine + H2O. It carries out the reaction 2-oxohexanoate + L-kynurenine = L-2-aminohexanoate + kynurenate + H2O. It catalyses the reaction 3-phenylpyruvate + L-kynurenine = kynurenate + L-phenylalanine + H2O. The catalysed reaction is 4-methylsulfanyl-2-oxobutanoate + L-kynurenine = kynurenate + L-methionine + H2O. The enzyme catalyses 2-oxo-3-sulfanylpropanoate + L-kynurenine = kynurenate + L-cysteine + H2O. It carries out the reaction indole-3-pyruvate + L-kynurenine = kynurenate + L-tryptophan + H2O. It catalyses the reaction 2-oxopentanoate + L-kynurenine = L-2-aminopentanoate + kynurenate + H2O. The catalysed reaction is 4-methyl-2-oxopentanoate + L-kynurenine = kynurenate + L-leucine + H2O. The enzyme catalyses glyoxylate + L-methionine = 4-methylsulfanyl-2-oxobutanoate + glycine. It carries out the reaction L-2-aminoadipate + glyoxylate = 2-oxoadipate + glycine. It catalyses the reaction L-tyrosine + glyoxylate = 3-(4-hydroxyphenyl)pyruvate + glycine. The catalysed reaction is glyoxylate + L-phenylalanine = 3-phenylpyruvate + glycine. The enzyme catalyses L-tryptophan + glyoxylate = indole-3-pyruvate + glycine. It carries out the reaction L-leucine + glyoxylate = 4-methyl-2-oxopentanoate + glycine. It catalyses the reaction 2-oxobutanoate + L-kynurenine = (2S)-2-aminobutanoate + kynurenate + H2O. The catalysed reaction is 2-oxoadipate + L-kynurenine = L-2-aminoadipate + kynurenate + H2O. It functions in the pathway amino-acid degradation; L-lysine degradation via saccharopine pathway; glutaryl-CoA from L-lysine: step 4/6. In terms of biological role, transaminase with broad substrate specificity. Has transaminase activity towards aminoadipate, kynurenine, methionine and glutamate. Shows activity also towards tryptophan, aspartate and hydroxykynurenine. Accepts a variety of oxo-acids as amino-group acceptors, with a preference for 2-oxoglutarate, 2-oxocaproic acid, phenylpyruvate and alpha-oxo-gamma-methiol butyric acid. Can also use glyoxylate as amino-group acceptor (in vitro). This is Kynurenine/alpha-aminoadipate aminotransferase, mitochondrial from Mus musculus (Mouse).